The sequence spans 278 residues: ATP synthase subunit delta (278 aa).

The protein belongs to the ATPase delta chain family. As to quaternary structure, F-type ATPases have 2 components, F(1) - the catalytic core - and F(0) - the membrane proton channel. F(1) has five subunits: alpha(3), beta(3), gamma(1), delta(1), epsilon(1). F(0) has three main subunits: a(1), b(2) and c(10-14). The alpha and beta chains form an alternating ring which encloses part of the gamma chain. F(1) is attached to F(0) by a central stalk formed by the gamma and epsilon chains, while a peripheral stalk is formed by the delta and b chains.

Its subcellular location is the cell membrane. F(1)F(0) ATP synthase produces ATP from ADP in the presence of a proton or sodium gradient. F-type ATPases consist of two structural domains, F(1) containing the extramembraneous catalytic core and F(0) containing the membrane proton channel, linked together by a central stalk and a peripheral stalk. During catalysis, ATP synthesis in the catalytic domain of F(1) is coupled via a rotary mechanism of the central stalk subunits to proton translocation. In terms of biological role, this protein is part of the stalk that links CF(0) to CF(1). It either transmits conformational changes from CF(0) to CF(1) or is implicated in proton conduction. The sequence is that of ATP synthase subunit delta from Bifidobacterium longum subsp. infantis (strain ATCC 15697 / DSM 20088 / JCM 1222 / NCTC 11817 / S12).